The following is a 108-amino-acid chain: Large ribosomal subunit protein bL31B (108 aa).

Residues 81–108 (KPAQPVQAPAEEGPVVKGKKKAPAKKKK) form a disordered region. Residues 97 to 108 (KGKKKAPAKKKK) are compositionally biased toward basic residues.

This sequence belongs to the bacterial ribosomal protein bL31 family. Type B subfamily. Part of the 50S ribosomal subunit.

In Chlamydia caviae (strain ATCC VR-813 / DSM 19441 / 03DC25 / GPIC) (Chlamydophila caviae), this protein is Large ribosomal subunit protein bL31B.